The following is a 133-amino-acid chain: Fluoride-specific ion channel FluC 3 (133 aa).

Transmembrane regions (helical) follow at residues 7–27, 37–57, and 60–80; these read ILVL…SGYV, WGTF…AGLG, and LGAI…LLGG. 2 residues coordinate Na(+): G79 and T82. The chain crosses the membrane as a helical span at residues 107-127; it reads IVASALLCVLAVAAGYGGIMW.

It belongs to the fluoride channel Fluc/FEX (TC 1.A.43) family.

It is found in the cell inner membrane. The enzyme catalyses fluoride(in) = fluoride(out). With respect to regulation, na(+) is not transported, but it plays an essential structural role and its presence is essential for fluoride channel function. Fluoride-specific ion channel. Important for reducing fluoride concentration in the cell, thus reducing its toxicity. The chain is Fluoride-specific ion channel FluC 3 from Brucella suis biovar 1 (strain 1330).